We begin with the raw amino-acid sequence, 372 residues long: Glutamate 5-kinase (372 aa).

Lys-14 contacts ATP. Residues Ser-54, Asp-141, and Asn-153 each contribute to the substrate site. Residues 173 to 174 (TD) and 215 to 221 (TGGMATK) contribute to the ATP site. In terms of domain architecture, PUA spans 280 to 358 (RGKLILDQGA…DDIESLLGYD (79 aa)).

It belongs to the glutamate 5-kinase family.

It is found in the cytoplasm. It carries out the reaction L-glutamate + ATP = L-glutamyl 5-phosphate + ADP. It functions in the pathway amino-acid biosynthesis; L-proline biosynthesis; L-glutamate 5-semialdehyde from L-glutamate: step 1/2. Functionally, catalyzes the transfer of a phosphate group to glutamate to form L-glutamate 5-phosphate. This chain is Glutamate 5-kinase, found in Shewanella sediminis (strain HAW-EB3).